The primary structure comprises 270 residues: Acetylglutamate kinase (270 aa).

Residues 53–54 (GG), Arg75, and Asn167 each bind substrate.

The protein belongs to the acetylglutamate kinase family. ArgB subfamily.

Its subcellular location is the cytoplasm. The catalysed reaction is N-acetyl-L-glutamate + ATP = N-acetyl-L-glutamyl 5-phosphate + ADP. It functions in the pathway amino-acid biosynthesis; L-arginine biosynthesis; N(2)-acetyl-L-ornithine from L-glutamate: step 2/4. Catalyzes the ATP-dependent phosphorylation of N-acetyl-L-glutamate. This Shewanella halifaxensis (strain HAW-EB4) protein is Acetylglutamate kinase.